The following is a 150-amino-acid chain: UPF0178 protein ECA0873 (150 aa).

The protein belongs to the UPF0178 family.

The sequence is that of UPF0178 protein ECA0873 from Pectobacterium atrosepticum (strain SCRI 1043 / ATCC BAA-672) (Erwinia carotovora subsp. atroseptica).